Here is a 151-residue protein sequence, read N- to C-terminus: Large ribosomal subunit protein uL15 (151 aa).

Residues 1-60 (MAENSPLKAHNLRPAPGAKTAKTRVGRGEASKGKTAGRGTKGTKARYQVPERFEGGQMPL) are disordered.

This sequence belongs to the universal ribosomal protein uL15 family. Part of the 50S ribosomal subunit.

Functionally, binds to the 23S rRNA. This is Large ribosomal subunit protein uL15 from Streptomyces griseus subsp. griseus (strain JCM 4626 / CBS 651.72 / NBRC 13350 / KCC S-0626 / ISP 5235).